The chain runs to 241 residues: NADPH-dependent FMN reductase ArsH (241 aa).

FMN is bound at residue 43 to 50 (SLRTVSYS).

This sequence belongs to the ArsH family. Homotetramer. FMN is required as a cofactor.

In terms of biological role, has NADPH-dependent FMN reductase activity. No activity with NADH. May play a role in resistance to heavy metal toxicity. In Rhizobium meliloti (strain 1021) (Ensifer meliloti), this protein is NADPH-dependent FMN reductase ArsH.